The chain runs to 362 residues: MYKTIREKTKAVYVGNVQIGGNNKVVIQSMTTTKTHDVEKTVAQVKELVREGCELVRIAVLDDEDAAAFGEVVKNSPCPIIADIHFNPLYAIKAIESGAAKVRLNPGNIKDEEQLRKIIDLANKKNIPIRVGVNSGSLPMDLMKSHGVTADAMMIAVKRYINLFESNGFNNIVVSLKATNVLLAIEAYKKAAMEFNYPLHIGITEAGSLFNGTIKSAAGLGVLLHEGIGNTIRISLTGDPLSEVKVCKKLLNSLGLYDNLVDIISCPTCGRLNFDLNPVVKEIEKFTRKMNFPLKVAILGCAVNGPGEAKEADIGIAGGNGTGIIFANGKAIKSVPEDQLVDELKKLISIKYKEYLDSKKDK.

4 residues coordinate [4Fe-4S] cluster: cysteine 266, cysteine 269, cysteine 301, and glutamate 308.

This sequence belongs to the IspG family. It depends on [4Fe-4S] cluster as a cofactor.

The catalysed reaction is (2E)-4-hydroxy-3-methylbut-2-enyl diphosphate + oxidized [flavodoxin] + H2O + 2 H(+) = 2-C-methyl-D-erythritol 2,4-cyclic diphosphate + reduced [flavodoxin]. It participates in isoprenoid biosynthesis; isopentenyl diphosphate biosynthesis via DXP pathway; isopentenyl diphosphate from 1-deoxy-D-xylulose 5-phosphate: step 5/6. Converts 2C-methyl-D-erythritol 2,4-cyclodiphosphate (ME-2,4cPP) into 1-hydroxy-2-methyl-2-(E)-butenyl 4-diphosphate. The sequence is that of 4-hydroxy-3-methylbut-2-en-1-yl diphosphate synthase (flavodoxin) from Malacoplasma penetrans (strain HF-2) (Mycoplasma penetrans).